The primary structure comprises 60 residues: Potassium channel toxin alpha-KTx 29.3 (60 aa).

Positions 1 to 28 (MKSVCGVLIILVVLTTMLSISTFSTVGA) are cleaved as a signal peptide. Cystine bridges form between cysteine 32-cysteine 51, cysteine 40-cysteine 56, and cysteine 44-cysteine 58.

The protein belongs to the short scorpion toxin superfamily. Potassium channel inhibitor family. Alpha-KTx 29 subfamily. As to expression, expressed by the venom gland.

The protein localises to the secreted. Functionally, weakly inhibits the Kv1.3/KCNA3 channel (1 uM of thetoxin inhibits currents by 13.2%) and Kv7.1/KCNQ1 channel (10 uM of the toxin inhibits currents by 27.7%). This Lychas mucronatus (Chinese swimming scorpion) protein is Potassium channel toxin alpha-KTx 29.3.